We begin with the raw amino-acid sequence, 379 residues long: Lipid-A-disaccharide synthase (379 aa).

The protein belongs to the LpxB family.

It carries out the reaction a lipid X + a UDP-2-N,3-O-bis[(3R)-3-hydroxyacyl]-alpha-D-glucosamine = a lipid A disaccharide + UDP + H(+). The protein operates within bacterial outer membrane biogenesis; LPS lipid A biosynthesis. Functionally, condensation of UDP-2,3-diacylglucosamine and 2,3-diacylglucosamine-1-phosphate to form lipid A disaccharide, a precursor of lipid A, a phosphorylated glycolipid that anchors the lipopolysaccharide to the outer membrane of the cell. The sequence is that of Lipid-A-disaccharide synthase from Aeromonas hydrophila subsp. hydrophila (strain ATCC 7966 / DSM 30187 / BCRC 13018 / CCUG 14551 / JCM 1027 / KCTC 2358 / NCIMB 9240 / NCTC 8049).